We begin with the raw amino-acid sequence, 415 residues long: Gamma-glutamyl phosphate reductase (415 aa).

Belongs to the gamma-glutamyl phosphate reductase family.

Its subcellular location is the cytoplasm. It carries out the reaction L-glutamate 5-semialdehyde + phosphate + NADP(+) = L-glutamyl 5-phosphate + NADPH + H(+). It participates in amino-acid biosynthesis; L-proline biosynthesis; L-glutamate 5-semialdehyde from L-glutamate: step 2/2. Its function is as follows. Catalyzes the NADPH-dependent reduction of L-glutamate 5-phosphate into L-glutamate 5-semialdehyde and phosphate. The product spontaneously undergoes cyclization to form 1-pyrroline-5-carboxylate. In Bacillus cereus (strain B4264), this protein is Gamma-glutamyl phosphate reductase.